Reading from the N-terminus, the 141-residue chain is Large ribosomal subunit protein uL11 (141 aa).

The protein belongs to the universal ribosomal protein uL11 family. As to quaternary structure, part of the ribosomal stalk of the 50S ribosomal subunit. Interacts with L10 and the large rRNA to form the base of the stalk. L10 forms an elongated spine to which L12 dimers bind in a sequential fashion forming a multimeric L10(L12)X complex. In terms of processing, one or more lysine residues are methylated.

Its function is as follows. Forms part of the ribosomal stalk which helps the ribosome interact with GTP-bound translation factors. The sequence is that of Large ribosomal subunit protein uL11 from Chlorobium chlorochromatii (strain CaD3).